A 287-amino-acid chain; its full sequence is Shikimate dehydrogenase (NADP(+)) (287 aa).

Shikimate-binding positions include 20–22 (SRS) and threonine 67. The active-site Proton acceptor is lysine 71. Glutamate 84 contacts NADP(+). Asparagine 93 and aspartate 108 together coordinate shikimate. NADP(+)-binding positions include 132–136 (GAGGA), 156–161 (NRTAAR), and methionine 226. Shikimate is bound at residue tyrosine 228. Residue glycine 250 coordinates NADP(+).

It belongs to the shikimate dehydrogenase family. As to quaternary structure, homodimer.

It carries out the reaction shikimate + NADP(+) = 3-dehydroshikimate + NADPH + H(+). Its pathway is metabolic intermediate biosynthesis; chorismate biosynthesis; chorismate from D-erythrose 4-phosphate and phosphoenolpyruvate: step 4/7. Functionally, involved in the biosynthesis of the chorismate, which leads to the biosynthesis of aromatic amino acids. Catalyzes the reversible NADPH linked reduction of 3-dehydroshikimate (DHSA) to yield shikimate (SA). This is Shikimate dehydrogenase (NADP(+)) from Bordetella bronchiseptica (strain ATCC BAA-588 / NCTC 13252 / RB50) (Alcaligenes bronchisepticus).